The primary structure comprises 342 residues: 4-hydroxy-3-methylbut-2-enyl diphosphate reductase (342 aa).

Cysteine 47 provides a ligand contact to [4Fe-4S] cluster. Positions 78 and 111 each coordinate (2E)-4-hydroxy-3-methylbut-2-enyl diphosphate. Residues histidine 78 and histidine 111 each contribute to the dimethylallyl diphosphate site. Residues histidine 78 and histidine 111 each contribute to the isopentenyl diphosphate site. Cysteine 133 contacts [4Fe-4S] cluster. Histidine 161 is a binding site for (2E)-4-hydroxy-3-methylbut-2-enyl diphosphate. Histidine 161 provides a ligand contact to dimethylallyl diphosphate. An isopentenyl diphosphate-binding site is contributed by histidine 161. The active-site Proton donor is the glutamate 163. Position 201 (threonine 201) interacts with (2E)-4-hydroxy-3-methylbut-2-enyl diphosphate. Cysteine 231 lines the [4Fe-4S] cluster pocket. Positions 259, 260, 261, and 303 each coordinate (2E)-4-hydroxy-3-methylbut-2-enyl diphosphate. Residues serine 259, serine 260, asparagine 261, and serine 303 each coordinate dimethylallyl diphosphate. 4 residues coordinate isopentenyl diphosphate: serine 259, serine 260, asparagine 261, and serine 303.

Belongs to the IspH family. It depends on [4Fe-4S] cluster as a cofactor.

It carries out the reaction isopentenyl diphosphate + 2 oxidized [2Fe-2S]-[ferredoxin] + H2O = (2E)-4-hydroxy-3-methylbut-2-enyl diphosphate + 2 reduced [2Fe-2S]-[ferredoxin] + 2 H(+). It catalyses the reaction dimethylallyl diphosphate + 2 oxidized [2Fe-2S]-[ferredoxin] + H2O = (2E)-4-hydroxy-3-methylbut-2-enyl diphosphate + 2 reduced [2Fe-2S]-[ferredoxin] + 2 H(+). It functions in the pathway isoprenoid biosynthesis; dimethylallyl diphosphate biosynthesis; dimethylallyl diphosphate from (2E)-4-hydroxy-3-methylbutenyl diphosphate: step 1/1. It participates in isoprenoid biosynthesis; isopentenyl diphosphate biosynthesis via DXP pathway; isopentenyl diphosphate from 1-deoxy-D-xylulose 5-phosphate: step 6/6. Catalyzes the conversion of 1-hydroxy-2-methyl-2-(E)-butenyl 4-diphosphate (HMBPP) into a mixture of isopentenyl diphosphate (IPP) and dimethylallyl diphosphate (DMAPP). Acts in the terminal step of the DOXP/MEP pathway for isoprenoid precursor biosynthesis. The chain is 4-hydroxy-3-methylbut-2-enyl diphosphate reductase from Anaplasma marginale (strain St. Maries).